A 507-amino-acid polypeptide reads, in one-letter code: Fumarate hydratase, mitochondrial (507 aa).

The transit peptide at Met1–Met41 directs the protein to the mitochondrion. N6-acetyllysine; alternate is present on residues Lys58, Lys63, and Lys77. N6-succinyllysine; alternate occurs at positions 58, 63, and 77. The residue at position 82 (Thr82) is a Phosphothreonine. Lys91 carries the post-translational modification N6-acetyllysine. Residues Lys112 and Lys119 each carry the N6-acetyllysine; alternate modification. N6-succinyllysine; alternate is present on residues Lys112 and Lys119. Substrate contacts are provided by residues Ser142–Thr144, His173–Asp176, and Ser183–Asn185. An N6-acetyllysine modification is found at Lys210. Lys220 is modified (N6-acetyllysine; alternate). Lys220 bears the N6-succinyllysine; alternate mark. Residue Thr231 participates in substrate binding. The active-site Proton donor/acceptor is His232. The residue at position 233 (Thr233) is a Phosphothreonine. Lys289 bears the N6-acetyllysine; alternate mark. Lys289 carries the N6-succinyllysine; alternate modification. The active site involves Ser362. Residues Ser363 and Lys368–Asn370 each bind substrate. Residue Ser363 is modified to Phosphoserine. Residues Lys464 and Lys470 each carry the N6-succinyllysine modification. At Lys499 the chain carries N6-acetyllysine.

Belongs to the class-II fumarase/aspartase family. Fumarase subfamily. As to quaternary structure, homotetramer. Interacts with H2AZ1. In terms of processing, phosphorylation at Thr-233 by PRKDC in response to DNA damage promotes translocation to the nucleus and recruitment to DNA double-strand breaks (DSBs).

It is found in the mitochondrion. Its subcellular location is the cytoplasm. The protein resides in the cytosol. The protein localises to the nucleus. It localises to the chromosome. It catalyses the reaction (S)-malate = fumarate + H2O. It functions in the pathway carbohydrate metabolism; tricarboxylic acid cycle; (S)-malate from fumarate: step 1/1. In terms of biological role, catalyzes the reversible stereospecific interconversion of fumarate to L-malate. Experiments in other species have demonstrated that specific isoforms of this protein act in defined pathways and favor one direction over the other. Functionally, catalyzes the hydration of fumarate to L-malate in the tricarboxylic acid (TCA) cycle to facilitate a transition step in the production of energy in the form of NADH. Its function is as follows. Catalyzes the dehydration of L-malate to fumarate. Fumarate metabolism in the cytosol plays a role during urea cycle and arginine metabolism; fumarate being a by-product of the urea cycle and amino-acid catabolism. Also plays a role in DNA repair by promoting non-homologous end-joining (NHEJ). In response to DNA damage and phosphorylation by PRKDC, translocates to the nucleus and accumulates at DNA double-strand breaks (DSBs): acts by catalyzing formation of fumarate, an inhibitor of KDM2B histone demethylase activity, resulting in enhanced dimethylation of histone H3 'Lys-36' (H3K36me2). The sequence is that of Fumarate hydratase, mitochondrial from Rattus norvegicus (Rat).